A 535-amino-acid polypeptide reads, in one-letter code: Ribonuclease Y (535 aa).

A helical membrane pass occupies residues I4–I24. Residues E118–I141 form a disordered region. The KH domain occupies T225–L285. Positions V351–A444 constitute an HD domain.

Belongs to the RNase Y family.

The protein resides in the cell membrane. In terms of biological role, endoribonuclease that initiates mRNA decay. The polypeptide is Ribonuclease Y (Streptococcus pyogenes serotype M2 (strain MGAS10270)).